The sequence spans 75 residues: Accessory gland-specific peptide 57Da (75 aa).

The signal sequence occupies residues 1 to 19; it reads MKFLALFVTLLVVLALVSA. A disordered region spans residues 55-75; that stretch reads AAPAAAPAAPEAGLADAPAES. Over residues 56–75 the composition is skewed to low complexity; the sequence is APAAAPAAPEAGLADAPAES.

Lumen fluid of male accessory glands, becomes seminal fluid.

It is found in the secreted. Transferred from male to female during mating and may affect egglaying and behavior after mating. In Drosophila melanogaster (Fruit fly), this protein is Accessory gland-specific peptide 57Da (Mst57Da).